The chain runs to 153 residues: Arginine repressor (153 aa).

This sequence belongs to the ArgR family.

It localises to the cytoplasm. It functions in the pathway amino-acid biosynthesis; L-arginine biosynthesis [regulation]. Its function is as follows. Regulates arginine biosynthesis genes. The polypeptide is Arginine repressor (Actinobacillus pleuropneumoniae serotype 5b (strain L20)).